A 239-amino-acid polypeptide reads, in one-letter code: uncharacterized protein (239 aa).

The next 3 helical transmembrane spans lie at 125-144 (LAII…LILY), 149-171 (IFVL…FLFL), and 197-216 (SVLN…GILF).

The protein resides in the cell membrane. This is an uncharacterized protein from Aquifex aeolicus (strain VF5).